The sequence spans 271 residues: GPN-loop GTPase 3 (271 aa).

13–18 (GAGKST) contacts GTP. The Gly-Pro-Asn (GPN)-loop; involved in dimer interface motif lies at 70-72 (GPN). 173 to 176 (SKLD) provides a ligand contact to GTP.

This sequence belongs to the GPN-loop GTPase family. As to quaternary structure, heterodimers with GPN1 or GPN2. Binds to RNA polymerase II (RNAPII).

Functionally, small GTPase required for proper nuclear import of RNA polymerase II and III (RNAPII and RNAPIII). May act at an RNAP assembly step prior to nuclear import. The sequence is that of GPN-loop GTPase 3 from Candida glabrata (strain ATCC 2001 / BCRC 20586 / JCM 3761 / NBRC 0622 / NRRL Y-65 / CBS 138) (Yeast).